Here is a 145-residue protein sequence, read N- to C-terminus: Large ribosomal subunit protein bL19 (145 aa).

This sequence belongs to the bacterial ribosomal protein bL19 family.

Functionally, this protein is located at the 30S-50S ribosomal subunit interface and may play a role in the structure and function of the aminoacyl-tRNA binding site. This Brachyspira hyodysenteriae (strain ATCC 49526 / WA1) protein is Large ribosomal subunit protein bL19.